Here is a 425-residue protein sequence, read N- to C-terminus: GPI mannosyltransferase 1 (425 aa).

9 helical membrane-spanning segments follow: residues 11-31 (VIGASIALRAVLLVYGAWQDA), 85-105 (FFAFGKALFALADVVAGWLIA), 144-164 (LLGVLVVGLLWAVLSRRVSLA), 166-186 (VILGLGVHFKIYPFIYGPAVV), 233-253 (IHLTLVALATFSALNVSMYIL), 295-315 (FESLAFIPQLLLSVVVIPLVL), 340-360 (SQYFLWYLIFLPFYLPSSSLM), 367-387 (ILVGLLWVIAQALWLQQGYNL), and 398-418 (GLFLASLFFFAVNVWILGIIV).

Belongs to the PIGM family.

The protein resides in the endoplasmic reticulum membrane. It participates in glycolipid biosynthesis; glycosylphosphatidylinositol-anchor biosynthesis. In terms of biological role, mannosyltransferase involved in glycosylphosphatidylinositol-anchor biosynthesis. Transfers the first alpha-1,4-mannose to GlcN-acyl-PI during GPI precursor assembly. Required for cell wall integrity. This Aspergillus fumigatus (strain ATCC MYA-4609 / CBS 101355 / FGSC A1100 / Af293) (Neosartorya fumigata) protein is GPI mannosyltransferase 1 (gpi14).